The sequence spans 105 residues: Putative membrane protein insertion efficiency factor (105 aa).

A disordered region spans residues 76 to 105 (GHPGGVDPVPPGPHETPRKTSTHDDEPPSR). Over residues 90–105 (ETPRKTSTHDDEPPSR) the composition is skewed to basic and acidic residues.

This sequence belongs to the UPF0161 family.

The protein resides in the cell inner membrane. Functionally, could be involved in insertion of integral membrane proteins into the membrane. The chain is Putative membrane protein insertion efficiency factor from Chromohalobacter salexigens (strain ATCC BAA-138 / DSM 3043 / CIP 106854 / NCIMB 13768 / 1H11).